The following is a 393-amino-acid chain: Serine/threonine protein kinase AFUB_078980 (393 aa).

A Protein kinase domain is found at 61–390 (YQVLSKLGFG…APELLTDPWL (330 aa)). ATP-binding positions include 67 to 75 (LGFGANSTV) and K90. Residue D190 is the Proton acceptor of the active site.

Belongs to the protein kinase superfamily. CMGC Ser/Thr protein kinase family.

It carries out the reaction L-seryl-[protein] + ATP = O-phospho-L-seryl-[protein] + ADP + H(+). The catalysed reaction is L-threonyl-[protein] + ATP = O-phospho-L-threonyl-[protein] + ADP + H(+). Its function is as follows. Serine/threonine protein kinase; part of the subtelomeric hrmA-associated cluster (HAC) containing genes that alter the hyphal surface (such as reduced total chitin or increased beta-glucan exposure) and perturb inter-hyphal interactions within the developing biofilms, resulting in a loss of vertically aligned polarized growing filaments. Consequently, this hypoxia-typic morphotype (called H-MORPH) with altered biofilm architecture leads to increased hypoxia fitness, increased host inflammation, rapid disease progression, and mortality in a murine model of invasive aspergillosis. This is Serine/threonine protein kinase AFUB_078980 from Aspergillus fumigatus (strain CBS 144.89 / FGSC A1163 / CEA10) (Neosartorya fumigata).